The primary structure comprises 297 residues: Ubiquinone biosynthesis protein COQ4, mitochondrial (297 aa).

The transit peptide at 1 to 54 (MLSSARARLPISLCSFSLPFARLPNTLSRYQETWQRLPGRTHPTRSIRTTPAYE) directs the protein to the mitochondrion. Zn(2+) is bound by residues His178, Asp179, His182, and Glu194.

It belongs to the COQ4 family. Component of a multi-subunit COQ enzyme complex, composed of at least COQ3, COQ4, COQ5, COQ6, COQ7 and COQ9. Zn(2+) serves as cofactor.

The protein resides in the mitochondrion inner membrane. It carries out the reaction a 4-hydroxy-3-methoxy-5-(all-trans-polyprenyl)benzoate + H(+) = a 2-methoxy-6-(all-trans-polyprenyl)phenol + CO2. Its pathway is cofactor biosynthesis; ubiquinone biosynthesis. Its function is as follows. Lyase that catalyzes the C1-decarboxylation of 4-hydroxy-3-methoxy-5-(all-trans-polyprenyl)benzoic acid into 2-methoxy-6-(all-trans-polyprenyl)phenol during ubiquinone biosynthesis. This chain is Ubiquinone biosynthesis protein COQ4, mitochondrial, found in Laccaria bicolor (strain S238N-H82 / ATCC MYA-4686) (Bicoloured deceiver).